The chain runs to 245 residues: Probable phosphatase YpAngola_A2446 (245 aa).

Residues His7, His9, His15, His40, Glu73, His101, His131, Asp192, and His194 each contribute to the Zn(2+) site.

The protein belongs to the PHP family. Homotrimer. The cofactor is Zn(2+).

The sequence is that of Probable phosphatase YpAngola_A2446 from Yersinia pestis bv. Antiqua (strain Angola).